The following is a 201-amino-acid chain: FMN-dependent NADH:quinone oxidoreductase (201 aa).

Residues serine 9 and 16–18 contribute to the FMN site; that span reads SYS.

The protein belongs to the azoreductase type 1 family. As to quaternary structure, homodimer. FMN is required as a cofactor.

It carries out the reaction 2 a quinone + NADH + H(+) = 2 a 1,4-benzosemiquinone + NAD(+). It catalyses the reaction N,N-dimethyl-1,4-phenylenediamine + anthranilate + 2 NAD(+) = 2-(4-dimethylaminophenyl)diazenylbenzoate + 2 NADH + 2 H(+). In terms of biological role, quinone reductase that provides resistance to thiol-specific stress caused by electrophilic quinones. Its function is as follows. Also exhibits azoreductase activity. Catalyzes the reductive cleavage of the azo bond in aromatic azo compounds to the corresponding amines. The chain is FMN-dependent NADH:quinone oxidoreductase from Mesomycoplasma hyopneumoniae (strain 7448) (Mycoplasma hyopneumoniae).